A 203-amino-acid polypeptide reads, in one-letter code: Ribosomal RNA small subunit methyltransferase G (203 aa).

S-adenosyl-L-methionine contacts are provided by residues Gly-73, Leu-78, 124 to 125, and Arg-139; that span reads VE.

This sequence belongs to the methyltransferase superfamily. RNA methyltransferase RsmG family.

The protein localises to the cytoplasm. It catalyses the reaction guanosine(527) in 16S rRNA + S-adenosyl-L-methionine = N(7)-methylguanosine(527) in 16S rRNA + S-adenosyl-L-homocysteine. Specifically methylates the N7 position of guanine in position 527 of 16S rRNA. This chain is Ribosomal RNA small subunit methyltransferase G, found in Haemophilus influenzae (strain 86-028NP).